Here is a 466-residue protein sequence, read N- to C-terminus: IQ domain-containing protein C (466 aa).

The 30-residue stretch at 6 to 35 (LVRKVSALQACVRGFLVRRQFQSLRAEYEA) folds into the IQ domain. 4 disordered regions span residues 105–157 (KSGE…PHSQ), 214–233 (EQAC…DQSY), 238–310 (TGEL…QTFG), and 394–466 (VLDL…EPPG). Residues 132–153 (PSQEKTRDTTRMENPEATDQRL) show a composition bias toward basic and acidic residues. Positions 282–293 (GPPSSIPSNSQA) are enriched in polar residues. Residues 297-306 (RLTKGPDDGR) show a composition bias toward basic and acidic residues. The residue at position 438 (Ser438) is a Phosphoserine.

The chain is IQ domain-containing protein C (IQCC) from Homo sapiens (Human).